Reading from the N-terminus, the 462-residue chain is Gastric inhibitory polypeptide receptor (462 aa).

An N-terminal signal peptide occupies residues 1–18 (MPLRPRLLLLCLWGLLLQ). At 19–135 (QAETDSEGQT…DQRLILERLQ (117 aa)) the chain is on the extracellular side. Cystine bridges form between Cys43–Cys67, Cys58–Cys100, and Cys81–Cys115. Residues Asn59 and Asn74 are each glycosylated (N-linked (GlcNAc...) asparagine). A helical transmembrane segment spans residues 136-158 (VVYTVGYSLSLGTLLLALLILSL). At 159 to 166 (FRRLHCTR) the chain is on the cytoplasmic side. A helical transmembrane segment spans residues 167-186 (NYIHMNVFLSFMLRAVAILT). The Extracellular portion of the chain corresponds to 187-214 (RDRLLPTLGPYPGDRTLTLRNQALAACR). Residues 215–239 (TAQIVTQYCVGANYTWLLVEGVYLH) form a helical membrane-spanning segment. At 240 to 251 (HLLVIVGGSEKG) the chain is on the cytoplasmic side. A helical transmembrane segment spans residues 252 to 275 (HFRCYLLLGWGAPALFVIPWVIVR). At 276–290 (YLLENTQCWERNEVK) the chain is on the extracellular side. Residues 291-316 (AIWWIIRTPILITILINFFIFIRILG) form a helical membrane-spanning segment. At 317–338 (ILVSKLRTRQMRCPDYRLRLAR) the chain is on the cytoplasmic side. The chain crosses the membrane as a helical span at residues 339 to 359 (STLTLVPLLGVHEVVFAPVTE). The Extracellular segment spans residues 360-374 (EQAEGTLRFAKLAFE). The chain crosses the membrane as a helical span at residues 375–395 (IFLSSFQGFLVSVLYCFINKE). At 396–462 (VQSEIRRSWR…PGEEVLESYC (67 aa)) the chain is on the cytoplasmic side. The segment at 421-462 (HAELGPQALPSRSAPREVPITGSTLPSGPLHGPGEEVLESYC) is disordered.

This sequence belongs to the G-protein coupled receptor 2 family. May form homodimers and heterodimers with GLP1R. In terms of processing, N-glycosylation is required for cell surface expression and lengthens receptor half-life by preventing degradation in the ER. In terms of tissue distribution, widely distributed including pancreatic islets, brain and various peripheral tissues.

It localises to the cell membrane. Its function is as follows. This is a receptor for GIP. The activity of this receptor is mediated by G proteins which activate adenylyl cyclase. This chain is Gastric inhibitory polypeptide receptor (GIPR), found in Mesocricetus auratus (Golden hamster).